Here is a 126-residue protein sequence, read N- to C-terminus: Large ribosomal subunit protein bL12 (126 aa).

This sequence belongs to the bacterial ribosomal protein bL12 family. Homodimer. Part of the ribosomal stalk of the 50S ribosomal subunit. Forms a multimeric L10(L12)X complex, where L10 forms an elongated spine to which 2 to 4 L12 dimers bind in a sequential fashion. Binds GTP-bound translation factors.

In terms of biological role, forms part of the ribosomal stalk which helps the ribosome interact with GTP-bound translation factors. Is thus essential for accurate translation. The sequence is that of Large ribosomal subunit protein bL12 from Nitrosococcus oceani (strain ATCC 19707 / BCRC 17464 / JCM 30415 / NCIMB 11848 / C-107).